Consider the following 455-residue polypeptide: Hexokinase-2 (455 aa).

One can recognise a Hexokinase domain in the interval 3 to 445; that stretch reads ANFQQAVKKL…SGIGAALCAL (443 aa). Positions 57–195 are hexokinase small subdomain; it reads TGAETGDFLA…NLPIRIEAVI (139 aa). ATP is bound at residue 68-73; sequence DFGGTN. Substrate is bound by residues 144-145, 161-162, and 196-197; these read SY, TK, and ND. A hexokinase large subdomain region spans residues 196–434; sequence NDTVGTLVTR…KLISIGIAKD (239 aa). Position 222 (threonine 222) interacts with ATP. Positions 225, 252, and 283 each coordinate substrate. ATP contacts are provided by residues 288–289, 325–329, and 400–404; these read GM, TSVLS, and SLVEH.

Belongs to the hexokinase family. Monomer.

It catalyses the reaction a D-hexose + ATP = a D-hexose 6-phosphate + ADP + H(+). The catalysed reaction is D-mannose + ATP = D-mannose 6-phosphate + ADP + H(+). It carries out the reaction D-fructose + ATP = D-fructose 6-phosphate + ADP + H(+). The enzyme catalyses D-glucose + ATP = D-glucose 6-phosphate + ADP + H(+). The protein operates within carbohydrate metabolism; hexose metabolism. It functions in the pathway carbohydrate degradation; glycolysis; D-glyceraldehyde 3-phosphate and glycerone phosphate from D-glucose: step 1/4. Functionally, catalyzes the phosphorylation of hexose (six-carbon sugars) to hexose 6-phosphate. Phosphorylates D-glucose, D-fructose and D-mannose. Compared to hxk1, has a much higher affinity for D-glucose. Constitutes the initial enzyme of glycolysis by catalyzing the phosphorylation of glucose to D-glucose 6-phosphate. This Schizosaccharomyces pombe (strain 972 / ATCC 24843) (Fission yeast) protein is Hexokinase-2.